Reading from the N-terminus, the 316-residue chain is DNA-directed RNA polymerase III subunit RPC6 (316 aa).

A2 is subject to N-acetylalanine. Glycyl lysine isopeptide (Lys-Gly) (interchain with G-Cter in SUMO2) cross-links involve residues K5 and K7. C287, C290, C296, and C307 together coordinate [4Fe-4S] cluster.

Belongs to the eukaryotic RPC34/RPC39 RNA polymerase subunit family. Component of the RNA polymerase III complex consisting of 17 subunits: a ten-subunit horseshoe-shaped catalytic core composed of POLR3A/RPC1, POLR3B/RPC2, POLR1C/RPAC1, POLR1D/RPAC2, POLR3K/RPC10, POLR2E/RPABC1, POLR2F/RPABC2, POLR2H/RPABC3, POLR2K/RPABC4 and POLR2L/RPABC5; a mobile stalk composed of two subunits POLR3H/RPC8 and CRCP/RPC9, protruding from the core and functioning primarily in transcription initiation; and additional subunits homologous to general transcription factors of the RNA polymerase II machinery, POLR3C/RPC3-POLR3F/RPC6-POLR3G/RPC7 heterotrimer required for transcription initiation and POLR3D/RPC4-POLR3E/RPC5 heterodimer involved in both transcription initiation and termination. Directly interacts with POLR3C. Interacts with TBP and TFIIIB90 and GTF3C4. Interacts with MAF1. As part of the RNA polymerase III complex, interacts with PKP2.

The protein localises to the nucleus. Functionally, DNA-dependent RNA polymerase catalyzes the transcription of DNA into RNA using the four ribonucleoside triphosphates as substrates. Specific peripheric component of RNA polymerase III (Pol III) which synthesizes small non-coding RNAs including 5S rRNA, snRNAs, tRNAs and miRNAs from at least 500 distinct genomic loci. Part of POLR3C/RPC3-POLR3F/RPC6-POLR3G/RPC7 heterotrimer that coordinates the dynamics of Pol III stalk and clamp modules during the transition from apo to elongation state. Pol III plays a key role in sensing and limiting infection by intracellular bacteria and DNA viruses, including varicella zoster virus. Acts as a nuclear and cytosolic DNA sensor detecting AT-rich DNA, involved in innate immune response. Can sense non-self dsDNA that serves as template for transcription into dsRNA. The non-self RNA polymerase III transcripts, such as Epstein-Barr virus-encoded RNAs (EBERs) induce type I interferon and NF-kappa-B through the RIG-I pathway. Preferentially binds double-stranded DNA (dsDNA). The protein is DNA-directed RNA polymerase III subunit RPC6 of Homo sapiens (Human).